Consider the following 111-residue polypeptide: Short neuropeptide F (111 aa).

The signal sequence occupies residues 1 to 24 (MSAMYAKRCAALVLLVVTVGLVNA). The propeptide occupies 25–76 (TENYMDYGEEMAEKTPAENIHELYRLLLQRNTLDNAGFGGIPLEHLMIRKSQ). At phenylalanine 85 the chain carries Phenylalanine amide. Positions 88-111 (SGPHVSARALPRPMGAVAGYDDNN) are excised as a propeptide.

As to expression, expressed throughout the central nervous system (at protein level).

It localises to the secreted. Plays a role in controlling food intake and regulating body size. In Camponotus floridanus (Florida carpenter ant), this protein is Short neuropeptide F.